A 213-amino-acid polypeptide reads, in one-letter code: Orotate phosphoribosyltransferase (213 aa).

Lysine 26 contributes to the 5-phospho-alpha-D-ribose 1-diphosphate binding site. An orotate-binding site is contributed by phenylalanine 34 to phenylalanine 35. Residues tyrosine 72–lysine 73, arginine 99, lysine 100, lysine 103, histidine 105, and aspartate 124–alanine 132 each bind 5-phospho-alpha-D-ribose 1-diphosphate. Orotate-binding residues include threonine 128 and arginine 156.

This sequence belongs to the purine/pyrimidine phosphoribosyltransferase family. PyrE subfamily. As to quaternary structure, homodimer. Mg(2+) is required as a cofactor.

It catalyses the reaction orotidine 5'-phosphate + diphosphate = orotate + 5-phospho-alpha-D-ribose 1-diphosphate. It participates in pyrimidine metabolism; UMP biosynthesis via de novo pathway; UMP from orotate: step 1/2. Its function is as follows. Catalyzes the transfer of a ribosyl phosphate group from 5-phosphoribose 1-diphosphate to orotate, leading to the formation of orotidine monophosphate (OMP). This is Orotate phosphoribosyltransferase from Vibrio vulnificus (strain YJ016).